The sequence spans 591 residues: Isocitrate dehydrogenase kinase/phosphatase (591 aa).

Residues 315-321 and lysine 336 each bind ATP; that span reads APGVKGM. The active site involves aspartate 371.

Belongs to the AceK family.

It localises to the cytoplasm. The enzyme catalyses L-seryl-[isocitrate dehydrogenase] + ATP = O-phospho-L-seryl-[isocitrate dehydrogenase] + ADP + H(+). Its function is as follows. Bifunctional enzyme which can phosphorylate or dephosphorylate isocitrate dehydrogenase (IDH) on a specific serine residue. This is a regulatory mechanism which enables bacteria to bypass the Krebs cycle via the glyoxylate shunt in response to the source of carbon. When bacteria are grown on glucose, IDH is fully active and unphosphorylated, but when grown on acetate or ethanol, the activity of IDH declines drastically concomitant with its phosphorylation. The sequence is that of Isocitrate dehydrogenase kinase/phosphatase from Pectobacterium atrosepticum (strain SCRI 1043 / ATCC BAA-672) (Erwinia carotovora subsp. atroseptica).